The following is a 416-amino-acid chain: Putative pseudouridine transporter (416 aa).

The Periplasmic portion of the chain corresponds to 1–2; sequence MD. The helical transmembrane segment at 3-23 threads the bilayer; the sequence is IMRSVVGMVVLLAIAFLLSVN. The Cytoplasmic segment spans residues 24–31; sequence KKSISLRT. A helical membrane pass occupies residues 32–52; the sequence is VGAALLLQIAIGGIMLYFPPG. Over 53-104 the chain is Periplasmic; the sequence is KWAVEQAALGVHKVMSYSDAGSAFIFGSLVGPKMDVLFDGAGFIFAFRVLPA. Residues 105-125 traverse the membrane as a helical segment; sequence IIFVTALISLLYYIGVMGLLI. Topologically, residues 126-172 are cytoplasmic; that stretch reads RILGSIFQKALNISKIESFVAVTTIFLGQNEIPAIVKPFIDRMNRNE. A helical transmembrane segment spans residues 173–193; the sequence is LFTAICSGMASIAGSMMIGYA. The Periplasmic portion of the chain corresponds to 194–196; that stretch reads GMG. A helical membrane pass occupies residues 197–217; the sequence is VPIDYLLAASLMAIPGGILFA. The Cytoplasmic portion of the chain corresponds to 218–268; sequence RILSPATEPSQVTFENLSFSETPPKSFIEAAASGAMTGLKIAAGVATVVMA. Residues 269 to 289 traverse the membrane as a helical segment; sequence FVAIIALINGIIGGIGGWFGF. At 290–352 the chain is on the periplasmic side; it reads ANASLESIFG…QTGGTLEVKT (63 aa). The helical transmembrane segment at 353–373 threads the bilayer; sequence IAIISFALCGFANFGSIGVVV. At 374 to 394 the chain is on the cytoplasmic side; that stretch reads GAFSAISPKRAPEIAQLGLRA. A helical transmembrane segment spans residues 395–415; sequence LAAATLSNLMSATIAGFFIGL. Residue A416 is a topological domain, periplasmic.

It belongs to the concentrative nucleoside transporter (CNT) (TC 2.A.41) family.

The protein localises to the cell inner membrane. Functionally, could be involved in pseudouridine transport. The protein is Putative pseudouridine transporter (psuT) of Escherichia coli (strain K12).